We begin with the raw amino-acid sequence, 267 residues long: Large ribosomal subunit protein bL9m (267 aa).

The N-terminal 52 residues, 1–52 (MAAPVVTAPGRALLRAGAGRLLRGGVQELLRPRHEGNAPDLACNFSLSQNRG), are a transit peptide targeting the mitochondrion.

It belongs to the bacterial ribosomal protein bL9 family. Component of the mitochondrial large ribosomal subunit (mt-LSU). Mature mammalian 55S mitochondrial ribosomes consist of a small (28S) and a large (39S) subunit. The 28S small subunit contains a 12S ribosomal RNA (12S mt-rRNA) and 30 different proteins. The 39S large subunit contains a 16S rRNA (16S mt-rRNA), a copy of mitochondrial valine transfer RNA (mt-tRNA(Val)), which plays an integral structural role, and 52 different proteins.

It is found in the mitochondrion. This chain is Large ribosomal subunit protein bL9m (MRPL9), found in Homo sapiens (Human).